The primary structure comprises 256 residues: Acetyl-coenzyme A carboxylase carboxyl transferase subunit alpha (256 aa).

Residues 1–236 (MSDVARILKE…KTAIVDELAE (236 aa)) form the CoA carboxyltransferase C-terminal domain.

It belongs to the AccA family. In terms of assembly, acetyl-CoA carboxylase is a heterohexamer composed of biotin carboxyl carrier protein (AccB), biotin carboxylase (AccC) and two subunits each of ACCase subunit alpha (AccA) and ACCase subunit beta (AccD).

The protein resides in the cytoplasm. The catalysed reaction is N(6)-carboxybiotinyl-L-lysyl-[protein] + acetyl-CoA = N(6)-biotinyl-L-lysyl-[protein] + malonyl-CoA. It participates in lipid metabolism; malonyl-CoA biosynthesis; malonyl-CoA from acetyl-CoA: step 1/1. Its function is as follows. Component of the acetyl coenzyme A carboxylase (ACC) complex. First, biotin carboxylase catalyzes the carboxylation of biotin on its carrier protein (BCCP) and then the CO(2) group is transferred by the carboxyltransferase to acetyl-CoA to form malonyl-CoA. The chain is Acetyl-coenzyme A carboxylase carboxyl transferase subunit alpha from Streptococcus thermophilus (strain ATCC BAA-491 / LMD-9).